We begin with the raw amino-acid sequence, 408 residues long: Phosphopentomutase (408 aa).

Mn(2+) contacts are provided by Asp10, Asp307, His312, Asp348, His349, and His360.

This sequence belongs to the phosphopentomutase family. Mn(2+) is required as a cofactor.

The protein localises to the cytoplasm. It carries out the reaction 2-deoxy-alpha-D-ribose 1-phosphate = 2-deoxy-D-ribose 5-phosphate. The catalysed reaction is alpha-D-ribose 1-phosphate = D-ribose 5-phosphate. It participates in carbohydrate degradation; 2-deoxy-D-ribose 1-phosphate degradation; D-glyceraldehyde 3-phosphate and acetaldehyde from 2-deoxy-alpha-D-ribose 1-phosphate: step 1/2. In terms of biological role, isomerase that catalyzes the conversion of deoxy-ribose 1-phosphate (dRib-1-P) and ribose 1-phosphate (Rib-1-P) to deoxy-ribose 5-phosphate (dRib-5-P) and ribose 5-phosphate (Rib-5-P), respectively. The chain is Phosphopentomutase from Buchnera aphidicola subsp. Baizongia pistaciae (strain Bp).